The primary structure comprises 190 residues: Probable thymidylate kinase (190 aa).

7–14 (GIDGAGKT) is a binding site for ATP.

Belongs to the thymidylate kinase family.

The enzyme catalyses dTMP + ATP = dTDP + ADP. In Thermoplasma volcanium (strain ATCC 51530 / DSM 4299 / JCM 9571 / NBRC 15438 / GSS1), this protein is Probable thymidylate kinase.